The primary structure comprises 256 residues: Imidazole glycerol phosphate synthase subunit HisF (256 aa).

Residues D11 and D130 contribute to the active site.

Belongs to the HisA/HisF family. In terms of assembly, heterodimer of HisH and HisF.

The protein resides in the cytoplasm. It carries out the reaction 5-[(5-phospho-1-deoxy-D-ribulos-1-ylimino)methylamino]-1-(5-phospho-beta-D-ribosyl)imidazole-4-carboxamide + L-glutamine = D-erythro-1-(imidazol-4-yl)glycerol 3-phosphate + 5-amino-1-(5-phospho-beta-D-ribosyl)imidazole-4-carboxamide + L-glutamate + H(+). It participates in amino-acid biosynthesis; L-histidine biosynthesis; L-histidine from 5-phospho-alpha-D-ribose 1-diphosphate: step 5/9. In terms of biological role, IGPS catalyzes the conversion of PRFAR and glutamine to IGP, AICAR and glutamate. The HisF subunit catalyzes the cyclization activity that produces IGP and AICAR from PRFAR using the ammonia provided by the HisH subunit. This is Imidazole glycerol phosphate synthase subunit HisF from Prochlorococcus marinus (strain MIT 9301).